The primary structure comprises 1235 residues: High-affinity potassium transport protein (1235 aa).

S15 bears the Phosphoserine mark. 2 helical membrane passes run 49–70 and 78–98; these read SFIA…ILLY and IDTL…TVDI. A glycan (N-linked (GlcNAc...) asparagine) is linked at N100. The helical transmembrane segment at 107–127 threads the bilayer; it reads IVLYIVCCISTPIAVHSCLAF. Disordered stretches follow at residues 161–310, 323–344, 361–441, and 488–565; these read LTAR…SPAD, EATA…GTRY, KIKI…TKPP, and RLST…HQLQ. The segment covering 164–179 has biased composition (polar residues); that stretch reads RTMTKNRTGTQRTSYP. N-linked (GlcNAc...) asparagine glycosylation occurs at N169. The segment covering 198–217 has biased composition (basic and acidic residues); it reads VNRDEQDSVHSDQNSHDISR. The span at 219–232 shows a compositional bias: low complexity; that stretch reads SSNNNTNHNGSSGS. N-linked (GlcNAc...) asparagine glycosylation is found at N222 and N227. The segment covering 237–247 has biased composition (acidic residues); it reads VKEDETDDNGE. Residues 248-274 are compositionally biased toward polar residues; that stretch reads YQENNSYSTVGSSSNTVADESLNQKPK. Residue N251 is glycosylated (N-linked (GlcNAc...) asparagine). N-linked (GlcNAc...) asparagine glycans are attached at residues N369 and N383. Composition is skewed to polar residues over residues 370–415 and 490–502; these read ESNT…SNSG and STGS…SNNV. A Phosphoserine modification is found at S414. N497, N501, and N532 each carry an N-linked (GlcNAc...) asparagine glycan. Residues 510-539 show a composition bias toward acidic residues; sequence DMDDDDDDDDNDGDNNEEYFADNESGDEDE. Position 534 is a phosphoserine (S534). Basic and acidic residues predominate over residues 540-563; sequence RVQQSEPHSDSELKSHQQQQEKHQ. Residues N580 and N677 are each glycosylated (N-linked (GlcNAc...) asparagine). The disordered stretch occupies residues 671–706; it reads HDGSHKNGSEEASSDSNENIYSTNGGSDHNGLNNYP. A compositionally biased stretch (polar residues) spans 680 to 706; that stretch reads EEASSDSNENIYSTNGGSDHNGLNNYP. The next 5 helical transmembrane spans lie at 778–800, 813–834, 838–858, 862–882, and 898–918; these read ILVV…WIIL, VSPT…GLTL, SMMS…FIII, GFPI…PDLS, and CFTL…LAGL. The N-linked (GlcNAc...) asparagine glycan is linked to N919. 2 helical membrane-spanning segments follow: residues 923-943 and 971-991; these read WILF…SKGY and SIQV…AISI. Positions 1003–1063 are disordered; sequence GLYGDMGGEP…KKKKKTENPN (61 aa). Acidic residues predominate over residues 1010 to 1031; sequence GEPEDTDTEDDGNDEDDDEENE. N1030 carries N-linked (GlcNAc...) asparagine glycosylation. A compositionally biased stretch (low complexity) spans 1036 to 1049; sequence QSSQRSSSNNNNNN. Transmembrane regions (helical) follow at residues 1078–1098 and 1111–1131; these read QLSF…ICEG and IFAI…SLGY. N-linked (GlcNAc...) asparagine glycosylation occurs at N1135.

It belongs to the TrkH potassium transport family.

The protein resides in the membrane. Functionally, this protein is required for high-affinity potassium transport. The polypeptide is High-affinity potassium transport protein (TRK1) (Saccharomyces cerevisiae (strain ATCC 204508 / S288c) (Baker's yeast)).